A 663-amino-acid polypeptide reads, in one-letter code: Heparan-alpha-glucosaminide N-acetyltransferase (663 aa).

The segment at 1 to 24 is disordered; the sequence is MTGARASAAEQRRAGRSGQARAAE. Residues 1–190 lie on the Lumenal, vesicle side of the membrane; sequence MTGARASAAE…LAVNEDPVDS (190 aa). N-linked (GlcNAc...) asparagine glycans are attached at residues Asn-94, Asn-142, and Asn-162. A disulfide bond links Cys-151 and Cys-462. Residues 191–211 form a helical membrane-spanning segment; that stretch reads NLPVSIAFLIGLAVIIVISFL. Residues 212-275 lie on the Cytoplasmic side of the membrane; it reads RLLLSLDDFN…PRLRSVDTFR (64 aa). Residues Ser-243 and Ser-245 each carry the phosphoserine modification. A helical membrane pass occupies residues 276 to 296; that stretch reads GIALILMVFVNYGGGKYWYFK. Residue His-297 is part of the active site. Topologically, residues 297 to 302 are lumenal, vesicle; sequence HASWNG. The helical transmembrane segment at 303 to 323 threads the bilayer; it reads LTVADLVFPWFVFIMGSSIFL. The Cytoplasmic segment spans residues 324 to 345; the sequence is SMTSILQRGCSKFRLLGKIAWR. The chain crosses the membrane as a helical span at residues 346–366; sequence SFLLICIGIIIVNPNYCLGPL. The Lumenal, vesicle portion of the chain corresponds to 367–374; that stretch reads SWDKVRIP. Residues 375 to 395 traverse the membrane as a helical segment; the sequence is GVLQRLGVTYFVVAVLELLFA. Residues 396 to 420 are Cytoplasmic-facing; it reads KPVPEHCASERSCLSLRDITSSWPQ. The chain crosses the membrane as a helical span at residues 421 to 441; that stretch reads WLLILVLEGLWLGLTFLLPVP. Over 442–500 the chain is Lumenal, vesicle; the sequence is GCPTGYLGPGGIGDFGKYPNCTGGAAGYIDRLLLGDDHLYQHPSSAVLYHTEVAYDPEG. Residues 501-521 form a helical membrane-spanning segment; the sequence is ILGTINSIVMAFLGVQAGKIL. Residues 522–529 lie on the Cytoplasmic side of the membrane; it reads LYYKARTK. The helical transmembrane segment at 530–550 threads the bilayer; the sequence is DILIRFTAWCCILGLISVALT. At 551 to 564 the chain is on the lumenal, vesicle side; the sequence is KVSENEGFIPVNKN. The helical transmembrane segment at 565–585 threads the bilayer; sequence LWSLSYVTTLSSFAFFILLVL. The Cytoplasmic portion of the chain corresponds to 586–592; it reads YPVVDVK. The helical transmembrane segment at 593-613 threads the bilayer; sequence GLWTGTPFFYPGMNSILVYVG. Residues 614–634 lie on the Lumenal, vesicle side of the membrane; that stretch reads HEVFENYFPFQWKLKDNQSHK. Positions 624 to 635 are lysosomal targeting region; sequence QWKLKDNQSHKE. The chain crosses the membrane as a helical span at residues 635–655; sequence EHLTQNIVATALWVLIAYILY. Residues 656–663 are Cytoplasmic-facing; sequence RKKIFWKI.

As to quaternary structure, homooligomer. Homooligomerization is necessary for enzyme activity. In terms of processing, undergoes intralysosomal proteolytic cleavage; occurs within the end of the first and/or the beginning of the second luminal domain and is essential for the activation of the enzyme. Glycosylated. As to expression, widely expressed, with highest level in leukocytes, heart, liver, skeletal muscle, lung, placenta and liver.

It localises to the lysosome membrane. It carries out the reaction alpha-D-glucosaminyl-[heparan sulfate](n) + acetyl-CoA = N-acetyl-alpha-D-glucosaminyl-[heparan sulfate](n) + CoA + H(+). In terms of biological role, lysosomal acetyltransferase that acetylates the non-reducing terminal alpha-glucosamine residue of intralysosomal heparin or heparan sulfate, converting it into a substrate for luminal alpha-N-acetyl glucosaminidase. The chain is Heparan-alpha-glucosaminide N-acetyltransferase (HGSNAT) from Homo sapiens (Human).